Here is a 126-residue protein sequence, read N- to C-terminus: Fluoride-specific ion channel FluC (126 aa).

The next 4 membrane-spanning stretches (helical) occupy residues 2–22, 37–57, 65–85, and 99–119; these read LITV…RYLI, VGVL…VVLA, LSPF…AFSL, and AALY…LGMM. Na(+) contacts are provided by glycine 75 and threonine 78.

The protein belongs to the fluoride channel Fluc/FEX (TC 1.A.43) family.

It localises to the cell inner membrane. The enzyme catalyses fluoride(in) = fluoride(out). With respect to regulation, na(+) is not transported, but it plays an essential structural role and its presence is essential for fluoride channel function. Fluoride-specific ion channel. Important for reducing fluoride concentration in the cell, thus reducing its toxicity. The sequence is that of Fluoride-specific ion channel FluC from Ruegeria sp. (strain TM1040) (Silicibacter sp.).